The following is a 1242-amino-acid chain: MLIKEYHILLPMSLDEYQVAQLYMIQKKSREESSGEGSGVEILANRPYTDGPGGNGQYTHKVYHVGSHIPGWFRALLPKAALQVEEESWNAYPYTRTRYTCPFVEKFSIEIETYYLPDGGQQPNVFNLSGAERRQRILDTIDIVRDAVAPGEYKAEEDPRLYRSVKTGRGPLADDWARTAAQTGPLMCAYKLCKVEFRYWGMQAKIEQFIHDVGLRRVMLRAHRQAWCWQDEWIELSMADIRALEEETARMLAQRMAKCNTGSEGPEAQTPGKPSTETQPGTRTAGTPDGPEAPPGPDASPDASFGKQWSSSSRSSYSSQHGGGVSPQSLSEWRMQNIARDSENSSEEEFFDAHEGFSDSDEVFPKEMTKWNSNDFIDAFASPTEVEGVPDPAIMATKGIEDEARAPRDSEGLDGTGDLGVEACSVHALFLILHSGSILDSGPGDTNSKQADVQTLSTAFEAVTRVHFPEALGHVALRLVPCPPICAAAYALVSNLSPYSHDGDSLSRSQDHIPLAALPLLATSSSRYQGAVATVIARTNQAYAAFLRSSEGTGFCGQVVLIGDGVGGILGFDALCHSASAGTGSRGSSRRGSMNNEMLSPEVGPVRDPLADGVEVLGRASPEPSALPAQRTSSDMANPDPDGSQNSLQVAPTVTSGEPRRASTASCPPASSEAPDGPTNAARLDFKVSGFFLFGSPLGLVLALRKTVMPALEVAQMRPACEQIYNLFHAADPCASRLEPLLAPKFQAIAPLAVPRYQKFPLGDGSSLLLADTLQTHSSLFLEELEMMVPSTPTSASGAFWKGNELGNEPAAQPAAPSTTSEVVKILDRWWGNKRIDYSLYCPEALTAFPTVTLPHLFHASYWESADVVAFILRQVIEKERPQLTECEEPSIYSPAFPREKWQRKRTQVKIRNVTSNHRASDTVVCEGRPQVLNGRFMYGPLDVVTLTGEKVDVYVMTQPLSGKWIHFGTEVTNSSGRLTFPVPSERALGIGVYPVRMVVRGDHTYAECCLTVVSRGTEAVVFSIDGSFTASVSIMGSDPKVRAGAVDVVRHWQDSGYLIVYVTGRPDMQKHRVVAWLSQHNFPHGVVSFCDGLTHDPLRQKAMFLQSLVQEVELNIVAGYGSPKDVAVYAALGLSPSQTYIVGRAVRKLQAQCQFLSDGYVAHLGQLEAGSHSHAPSGPPRAALAKSSYAVAAPVDFLRKQSQLLRSRGPSQVDLEGPGTPPTTLARGKTRSISLKLDSEE.

Phosphothreonine is present on residues Thr-59, Thr-282, and Thr-287. The interval 259–330 (CNTGSEGPEA…HGGGVSPQSL (72 aa)) is disordered. Polar residues predominate over residues 272-282 (GKPSTETQPGT). Over residues 299-319 (ASPDASFGKQWSSSSRSSYSS) the composition is skewed to low complexity. Residues Ser-300, Ser-304, Ser-319, Ser-326, Ser-329, Ser-342, Ser-345, Ser-346, and Ser-373 each carry the phosphoserine modification. The residue at position 382 (Ser-382) is a Phosphoserine; by CDK1. The span at 581-593 (AGTGSRGSSRRGS) shows a compositional bias: low complexity. A disordered region spans residues 581 to 678 (AGTGSRGSSR…PASSEAPDGP (98 aa)). 3 positions are modified to phosphoserine: Ser-593, Ser-600, and Ser-621. Over residues 643 to 656 (GSQNSLQVAPTVTS) the composition is skewed to polar residues. Residues 684–878 (LDFKVSGFFL…VAFILRQVIE (195 aa)) form the DDHD domain. Residue Ser-894 is modified to Phosphoserine. Positions 1207–1242 (RSRGPSQVDLEGPGTPPTTLARGKTRSISLKLDSEE) are disordered. At Arg-1209 the chain carries Omega-N-methylarginine. Ser-1235 is modified (phosphoserine).

Belongs to the PtdIns transfer protein family. PI transfer class IIA subfamily. In terms of assembly, interacts with PIK4CA and VAPB. Interacts with PTK2B via its C-terminus. Interacts with RHOA. Has higher affinity for the inactive, GDP-bound form of RHOA. The CDK1-phosphorylated form interacts with PLK1. Post-translationally, phosphorylated on multiple sites by CDK1 at the onset of mitosis. Phosphorylation facilitates dissociation from the Golgi complex and is required for interaction with PLK1. In terms of processing, phosphorylated on threonine residues upon treatment with oleic acid. Phosphorylated on tyrosine residues by PTK2B.

Its subcellular location is the cytoplasm. It is found in the golgi apparatus. The protein resides in the golgi stack membrane. It localises to the endoplasmic reticulum membrane. The protein localises to the lipid droplet. Its subcellular location is the cleavage furrow. It is found in the midbody. The catalysed reaction is a 1,2-diacyl-sn-glycero-3-phospho-(1D-myo-inositol)(in) = a 1,2-diacyl-sn-glycero-3-phospho-(1D-myo-inositol)(out). Its function is as follows. Catalyzes the transfer of phosphatidylinositol (PI) between membranes. Binds PI, phosphatidylcholine (PC) and phosphatidic acid (PA) with the binding affinity order of PI &gt; PA &gt; PC. Regulates RHOA activity, and plays a role in cytoskeleton remodeling. Necessary for normal completion of cytokinesis. Plays a role in maintaining normal diacylglycerol levels in the Golgi apparatus. Necessary for maintaining the normal structure of the endoplasmic reticulum and the Golgi apparatus. Required for protein export from the endoplasmic reticulum and the Golgi. Binds calcium ions. The polypeptide is Membrane-associated phosphatidylinositol transfer protein 1 (Pitpnm1) (Rattus norvegicus (Rat)).